A 355-amino-acid chain; its full sequence is Glucose-6-phosphatase 2 (355 aa).

Over 1 to 24 (MDFLHRSGVLIIHHLQEDYRTYYG) the chain is Lumenal. Residues 25-45 (FLNFMSNVGDPRNIFSIYFPL) form a helical membrane-spanning segment. Topologically, residues 46-56 (WFQLNQNVGTK) are cytoplasmic. The helical transmembrane segment at 57–77 (MIWVAVIGDWFNLIFKWILFG) threads the bilayer. Residues 78–115 (HRPYWWIQETEIYPNHSSPCLEQFPTTCETGPGSPSGH) are Lumenal-facing. Residue arginine 79 coordinates substrate. N-linked (GlcNAc...) asparagine glycosylation is present at asparagine 92. Residue histidine 115 is the Proton donor of the active site. Residues 116 to 136 (AMGSSCVWYVMVTAALSYTIS) traverse the membrane as a helical segment. The Cytoplasmic segment spans residues 137–146 (RMEESSVTLH). A helical transmembrane segment spans residues 147–167 (RLTWSFLWSVFWLIQISVCIS). Position 168 (arginine 168) is a topological domain, lumenal. Arginine 168 is a substrate binding site. The helical transmembrane segment at 169–189 (VFIATHFPHQVILGVIGGMLV) threads the bilayer. The active-site Nucleophile is histidine 174. The Cytoplasmic portion of the chain corresponds to 190-211 (AEAFEHTPGVHMASLSVYLKTN). Residues 212 to 232 (VFLFLFALGFYLLLRLFGIDL) traverse the membrane as a helical segment. The Lumenal segment spans residues 233-252 (LWSVPIAKKWCANPDWIHID). A helical membrane pass occupies residues 253-273 (STPFAGLVRNLGVLFGLGFAI). The Cytoplasmic portion of the chain corresponds to 274–290 (NSEMFLRSCQGENGTKP). A helical transmembrane segment spans residues 291 to 307 (SFRLLCALTSLTTMQLY). Residues 308-318 (RFIKIPTHAEP) lie on the Lumenal side of the membrane. Residues 319 to 339 (LFYLLSFCKSASIPLMVVALI) form a helical membrane-spanning segment. Over 340–355 (PYCVHMLMRPGDKKTK) the chain is Cytoplasmic. The short motif at 352–355 (KKTK) is the Prevents secretion from ER element.

The protein belongs to the glucose-6-phosphatase family. N-glycosylated; the non-glycosylated form is more unstable and is degraded through the proteasome. Specifically expressed in pancreatic islet cells, in particular those of beta-cell origin. Not detected in testis, kidney, muscle, liver, lung, spleen, brain, pituitary, gastric fundus or heart.

It is found in the endoplasmic reticulum membrane. It catalyses the reaction D-glucose 6-phosphate + H2O = D-glucose + phosphate. The protein operates within carbohydrate biosynthesis; gluconeogenesis. Its function is as follows. May hydrolyze glucose-6-phosphate to glucose in the endoplasmic reticulum. May be responsible for glucose production through glycogenolysis and gluconeogenesis. The protein is Glucose-6-phosphatase 2 (G6pc2) of Mus musculus (Mouse).